The primary structure comprises 254 residues: MMSMSFMSDTLNSSDPSKSAFLEFGHGLASNQQHLSGFAHNIYPVHGLHSGGHLQHDAPYPSSAPHYSRPLGYAYPGPVSAAAPGAYMPYQPNNHSGALAHTRAENTNHEKPAVIENGEIRLNGKGKKIRKPRTIYSSVQLQALHQRFQQTQYLALPERADLAAKLGLTQTQVKIWFQNKRSKYKKIMKHGSSGPEGELLHTSSSSPCSPGLSQLWEVSMANKVPPMHPSSYMNNYGHWYPPHHQDPVPRPQMM.

The homeobox DNA-binding region spans 129–188; sequence IRKPRTIYSSVQLQALHQRFQQTQYLALPERADLAAKLGLTQTQVKIWFQNKRSKYKKIM.

This sequence belongs to the distal-less homeobox family.

It localises to the nucleus. Its function is as follows. During larvae development, may be important for neurocranium morphogenesis. This chain is Homeobox protein Dlx4b (dlx4b), found in Danio rerio (Zebrafish).